The primary structure comprises 177 residues: ATP synthase subunit delta (177 aa).

It belongs to the ATPase delta chain family. F-type ATPases have 2 components, F(1) - the catalytic core - and F(0) - the membrane proton channel. F(1) has five subunits: alpha(3), beta(3), gamma(1), delta(1), epsilon(1). F(0) has three main subunits: a(1), b(2) and c(10-14). The alpha and beta chains form an alternating ring which encloses part of the gamma chain. F(1) is attached to F(0) by a central stalk formed by the gamma and epsilon chains, while a peripheral stalk is formed by the delta and b chains.

The protein localises to the cell inner membrane. In terms of biological role, f(1)F(0) ATP synthase produces ATP from ADP in the presence of a proton or sodium gradient. F-type ATPases consist of two structural domains, F(1) containing the extramembraneous catalytic core and F(0) containing the membrane proton channel, linked together by a central stalk and a peripheral stalk. During catalysis, ATP synthesis in the catalytic domain of F(1) is coupled via a rotary mechanism of the central stalk subunits to proton translocation. Functionally, this protein is part of the stalk that links CF(0) to CF(1). It either transmits conformational changes from CF(0) to CF(1) or is implicated in proton conduction. This chain is ATP synthase subunit delta, found in Yersinia pseudotuberculosis serotype O:1b (strain IP 31758).